The chain runs to 229 residues: UPF0128 protein aq_756 (229 aa).

It belongs to the UPF0128 family.

This chain is UPF0128 protein aq_756, found in Aquifex aeolicus (strain VF5).